The following is a 364-amino-acid chain: Guanine nucleotide-binding protein alpha-8 subunit (364 aa).

Gly2 carries N-myristoyl glycine lipidation. Cys5 carries S-palmitoyl cysteine lipidation. One can recognise a G-alpha domain in the interval 38-364 (KILKLLILGP…QHTMQKVGIQ (327 aa)). The tract at residues 41 to 54 (KLLILGPGESGKST) is G1 motif. Residues 46–53 (GPGESGKS), 186–192 (LKSRVPT), 211–215 (DVGGQ), 280–283 (NKID), and Ala336 contribute to the GTP site. Mg(2+) contacts are provided by Ser53 and Thr192. The interval 184-192 (DILKSRVPT) is G2 motif. Positions 207-216 (FKIFDVGGQR) are G3 motif. The G4 motif stretch occupies residues 276-283 (ILFLNKID). A G5 motif region spans residues 334 to 339 (TCATDT).

The protein belongs to the G-alpha family. In terms of assembly, g proteins are composed of 3 units; alpha, beta and gamma. The alpha chain contains the guanine nucleotide binding site.

Guanine nucleotide-binding proteins (G proteins) are involved as modulators or transducers in various transmembrane signaling systems. This Caenorhabditis briggsae protein is Guanine nucleotide-binding protein alpha-8 subunit (gpa-8).